Reading from the N-terminus, the 329-residue chain is Clavesin-2 (329 aa).

In terms of domain architecture, CRAL-TRIO spans I96–D257. Positions S293 to D329 are disordered. The segment covering V308 to E319 has biased composition (basic and acidic residues).

It localises to the golgi apparatus. It is found in the trans-Golgi network membrane. The protein localises to the early endosome membrane. Its subcellular location is the cytoplasmic vesicle. The protein resides in the clathrin-coated vesicle. Required for normal morphology of late endosomes and/or lysosomes in neurons. Binds phosphatidylinositol 3,5-bisphosphate (PtdIns(3,5)P2). In Danio rerio (Zebrafish), this protein is Clavesin-2 (clvs2).